Consider the following 479-residue polypeptide: Wax ester synthase/diacylglycerol acyltransferase 2 (479 aa).

Over methionine 1–asparagine 182 the chain is Cytoplasmic. Histidine 144 serves as the catalytic Proton acceptor. Residues valine 183–phenylalanine 199 traverse the membrane as a helical segment. Residues histidine 200–valine 479 are Lumenal-facing. Residue asparagine 253 is glycosylated (N-linked (GlcNAc...) asparagine).

In the N-terminal section; belongs to the long-chain O-acyltransferase family. In terms of tissue distribution, mostly expressed in flowers and siliques and barely in roots and stems.

It localises to the cell membrane. The protein resides in the endoplasmic reticulum membrane. It carries out the reaction an acyl-CoA + a 1,2-diacyl-sn-glycerol = a triacyl-sn-glycerol + CoA. The catalysed reaction is a long chain fatty alcohol + a fatty acyl-CoA = a wax ester + CoA. The protein operates within glycerolipid metabolism; triacylglycerol biosynthesis. It functions in the pathway lipid metabolism. Bifunctional wax ester synthase/diacylglycerol acyltransferase. Involved in cuticular wax biosynthesis. The protein is Wax ester synthase/diacylglycerol acyltransferase 2 of Arabidopsis thaliana (Mouse-ear cress).